A 62-amino-acid chain; its full sequence is Protein DsrB (62 aa).

Belongs to the DsrB family.

The polypeptide is Protein DsrB (Escherichia fergusonii (strain ATCC 35469 / DSM 13698 / CCUG 18766 / IAM 14443 / JCM 21226 / LMG 7866 / NBRC 102419 / NCTC 12128 / CDC 0568-73)).